The chain runs to 423 residues: Adenylosuccinate synthetase (423 aa).

GTP contacts are provided by residues 12-18 (GDEGKGK) and 40-42 (GHT). Aspartate 13 (proton acceptor) is an active-site residue. Mg(2+)-binding residues include aspartate 13 and glycine 40. IMP contacts are provided by residues 13–16 (DEGK), 38–41 (NAGH), threonine 129, arginine 143, glutamine 221, threonine 236, and arginine 300. Histidine 41 functions as the Proton donor in the catalytic mechanism. A substrate-binding site is contributed by 296-302 (AVTGRER). GTP-binding positions include arginine 302, 328–330 (KSD), and 408–410 (SVG).

This sequence belongs to the adenylosuccinate synthetase family. Homodimer. Mg(2+) is required as a cofactor.

The protein localises to the cytoplasm. It carries out the reaction IMP + L-aspartate + GTP = N(6)-(1,2-dicarboxyethyl)-AMP + GDP + phosphate + 2 H(+). It functions in the pathway purine metabolism; AMP biosynthesis via de novo pathway; AMP from IMP: step 1/2. Plays an important role in the de novo pathway of purine nucleotide biosynthesis. Catalyzes the first committed step in the biosynthesis of AMP from IMP. In Phocaeicola vulgatus (strain ATCC 8482 / DSM 1447 / JCM 5826 / CCUG 4940 / NBRC 14291 / NCTC 11154) (Bacteroides vulgatus), this protein is Adenylosuccinate synthetase.